Reading from the N-terminus, the 336-residue chain is Phospho-N-acetylmuramoyl-pentapeptide-transferase (336 aa).

The next 10 membrane-spanning stretches (helical) occupy residues 3 to 23 (LSIMAGVIAFVLTVIAIPRFI), 52 to 72 (MGGTVFLIVALLVSLIFSIIL), 79 to 99 (NLGATFGILSVVLIYGIIGFL), 123 to 143 (LIAGLIFYFVHVLPSGTSAIN), 144 to 164 (IFGFYLEVGYLYAFFVLFWVV), 175 to 195 (GIDGLASISVVISLITYGIIA), 201 to 221 (FDILLIIVIMIGALLGFFVFN), 227 to 247 (VFMGDVGSLALGAMLAAISIA), 255 to 275 (LFIGFVYVFETSSVMLQVAYF), and 315 to 335 (VDAFLWAIGIFMSAITLAILY).

The protein belongs to the glycosyltransferase 4 family. MraY subfamily. Mg(2+) is required as a cofactor.

It localises to the cell membrane. It carries out the reaction UDP-N-acetyl-alpha-D-muramoyl-L-alanyl-gamma-D-glutamyl-L-lysyl-D-alanyl-D-alanine + di-trans,octa-cis-undecaprenyl phosphate = Mur2Ac(oyl-L-Ala-gamma-D-Glu-L-Lys-D-Ala-D-Ala)-di-trans,octa-cis-undecaprenyl diphosphate + UMP. It functions in the pathway cell wall biogenesis; peptidoglycan biosynthesis. Its function is as follows. Catalyzes the initial step of the lipid cycle reactions in the biosynthesis of the cell wall peptidoglycan: transfers peptidoglycan precursor phospho-MurNAc-pentapeptide from UDP-MurNAc-pentapeptide onto the lipid carrier undecaprenyl phosphate, yielding undecaprenyl-pyrophosphoryl-MurNAc-pentapeptide, known as lipid I. The sequence is that of Phospho-N-acetylmuramoyl-pentapeptide-transferase from Streptococcus agalactiae serotype Ia (strain ATCC 27591 / A909 / CDC SS700).